Reading from the N-terminus, the 352-residue chain is Cyclin-O (352 aa).

The interval 1 to 40 (MVTPCPASPGSPAAGAGRRDSHQNLRAPVKKSRRPCLRRK) is disordered. Residues 28 to 40 (PVKKSRRPCLRRK) are compositionally biased toward basic residues. Ser-83 is subject to Phosphoserine.

Belongs to the cyclin family. Present in respiratory cells (at protein level). Expressed in multiciliated tissue in brain and fallopian tube (at protein level). Highly expressed in oocytes.

The protein resides in the cytoplasm. It is found in the nucleus. Its subcellular location is the nucleolus. Its function is as follows. Specifically required for generation of multiciliated cells, possibly by promoting a cell cycle state compatible with centriole amplification and maturation. Acts downstream of MCIDAS to promote mother centriole amplification and maturation in preparation for apical docking. May be involved in apoptosis in lymphoid cells; however, this result requires additional evidences in vivo. May be involved in oocyte meiotic resumption in oocytes. The sequence is that of Cyclin-O from Mus musculus (Mouse).